The primary structure comprises 445 residues: C-terminal-binding protein 2 (445 aa).

At Arg22 the chain carries Asymmetric dimethylarginine. Residues Ser106, 186–191, Asp210, 243–249, 270–272, and Asp296 contribute to the NAD(+) site; these read IGFGRT, CNLNEHN, and AAR. Residue Arg272 is part of the active site. Residue Glu301 is part of the active site. The active-site Proton donor is the His321. 321-324 lines the NAD(+) pocket; it reads HTAW. The interval 414-445 is disordered; that stretch reads THNLPTVAHPSQAPSPNQPTKHGDNREHPNEQ. Position 428 is a phosphoserine (Ser428). Over residues 434 to 445 the composition is skewed to basic and acidic residues; sequence KHGDNREHPNEQ.

The protein belongs to the D-isomer specific 2-hydroxyacid dehydrogenase family. Interacts with the C-terminus of adenovirus E1A protein. Can form homodimers or heterodimers of CTBP1 and CTBP2. Interacts with HIPK2. Interacts with ZNF217, PNN, NRIP1 and WIZ. Interacts with PRDM16; represses white adipose tissue (WAT)-specific genes expression. Interacts with MCRIP1. As to expression, isoform 2 is specifically localized in synaptic ribbon (at protein level).

It is found in the nucleus. The protein localises to the synapse. In terms of biological role, corepressor targeting diverse transcription regulators. Functions in brown adipose tissue (BAT) differentiation. Isoform 2 probably acts as a scaffold for specialized synapses. The sequence is that of C-terminal-binding protein 2 (CTBP2) from Bos taurus (Bovine).